The sequence spans 89 residues: Antitoxin RelB (89 aa).

Belongs to the phD/YefM antitoxin family. As to quaternary structure, interacts with toxin RelE, which neutralizes its toxicity. Also interacts with toxins RelG and RelK in vitro, in M.smegmatis coexpression with non-cognate toxins neutralizes the toxicity of RelG while increasing the toxicity of RelK.

Functionally, antitoxin component of a type II toxin-antitoxin (TA) system. Upon expression in M.smegmatis neutralizes the effect of toxin RelE. Induces its own promoter, in combination with RelE represses its own promoter. Binds DNA in complex with toxin RelE but not alone. The chain is Antitoxin RelB (relB) from Mycobacterium tuberculosis (strain ATCC 25618 / H37Rv).